The chain runs to 399 residues: Phosphoglycerate kinase (399 aa).

Substrate is bound by residues 21-23 (DFN), R37, 60-63 (HLGR), R119, and R152. ATP contacts are provided by residues K205, G296, E327, and 353–356 (GGDT).

The protein belongs to the phosphoglycerate kinase family. Monomer.

The protein localises to the cytoplasm. It carries out the reaction (2R)-3-phosphoglycerate + ATP = (2R)-3-phospho-glyceroyl phosphate + ADP. The protein operates within carbohydrate degradation; glycolysis; pyruvate from D-glyceraldehyde 3-phosphate: step 2/5. The protein is Phosphoglycerate kinase of Sulfurimonas denitrificans (strain ATCC 33889 / DSM 1251) (Thiomicrospira denitrificans (strain ATCC 33889 / DSM 1251)).